The sequence spans 349 residues: NADH-quinone oxidoreductase subunit H (349 aa).

8 helical membrane passes run 16 to 36, 88 to 108, 123 to 143, 157 to 177, 202 to 222, 264 to 284, 285 to 305, and 325 to 345; these read WPVV…MGCV, GLFI…WAVV, LLFL…AGWA, AAQM…VLLI, FLSW…ISGI, ILVS…PVGF, LPDG…IFLW, and VFIP…MSPL.

This sequence belongs to the complex I subunit 1 family. As to quaternary structure, NDH-1 is composed of 14 different subunits. Subunits NuoA, H, J, K, L, M, N constitute the membrane sector of the complex.

The protein resides in the cell inner membrane. It catalyses the reaction a quinone + NADH + 5 H(+)(in) = a quinol + NAD(+) + 4 H(+)(out). In terms of biological role, NDH-1 shuttles electrons from NADH, via FMN and iron-sulfur (Fe-S) centers, to quinones in the respiratory chain. The immediate electron acceptor for the enzyme in this species is believed to be ubiquinone. Couples the redox reaction to proton translocation (for every two electrons transferred, four hydrogen ions are translocated across the cytoplasmic membrane), and thus conserves the redox energy in a proton gradient. This subunit may bind ubiquinone. This Azoarcus sp. (strain BH72) protein is NADH-quinone oxidoreductase subunit H.